The following is a 638-amino-acid chain: Chaperone protein HtpG (638 aa).

Residues 1 to 346 form an a; substrate-binding region; that stretch reads MSQQETHGFQ…SNDLPLNVSR (346 aa). The interval 347–563 is b; that stretch reads EILQDNKVTT…EGEMSTQMIK (217 aa). The tract at residues 564-638 is c; that stretch reads LMQAAGQDVP…MNQMLLASVK (75 aa).

This sequence belongs to the heat shock protein 90 family. As to quaternary structure, homodimer.

The protein localises to the cytoplasm. Functionally, molecular chaperone. Has ATPase activity. In Shewanella pealeana (strain ATCC 700345 / ANG-SQ1), this protein is Chaperone protein HtpG.